The chain runs to 331 residues: tRNA-cytidine(32) 2-sulfurtransferase (331 aa).

The interval 1-33 (MNAPHMNDTAADAATLDDAAAPAGRPALTRREQ) is disordered. Positions 8-23 (DTAADAATLDDAAAPA) are enriched in low complexity. Positions 71 to 76 (SGGKDS) match the PP-loop motif motif. 3 residues coordinate [4Fe-4S] cluster: C146, C149, and C237.

It belongs to the TtcA family. In terms of assembly, homodimer. Requires Mg(2+) as cofactor. [4Fe-4S] cluster is required as a cofactor.

The protein localises to the cytoplasm. It carries out the reaction cytidine(32) in tRNA + S-sulfanyl-L-cysteinyl-[cysteine desulfurase] + AH2 + ATP = 2-thiocytidine(32) in tRNA + L-cysteinyl-[cysteine desulfurase] + A + AMP + diphosphate + H(+). It functions in the pathway tRNA modification. Functionally, catalyzes the ATP-dependent 2-thiolation of cytidine in position 32 of tRNA, to form 2-thiocytidine (s(2)C32). The sulfur atoms are provided by the cysteine/cysteine desulfurase (IscS) system. The polypeptide is tRNA-cytidine(32) 2-sulfurtransferase (Burkholderia cenocepacia (strain HI2424)).